We begin with the raw amino-acid sequence, 302 residues long: Phosphoribosylaminoimidazole-succinocarboxamide synthase (302 aa).

It belongs to the SAICAR synthetase family.

It catalyses the reaction 5-amino-1-(5-phospho-D-ribosyl)imidazole-4-carboxylate + L-aspartate + ATP = (2S)-2-[5-amino-1-(5-phospho-beta-D-ribosyl)imidazole-4-carboxamido]succinate + ADP + phosphate + 2 H(+). Its pathway is purine metabolism; IMP biosynthesis via de novo pathway; 5-amino-1-(5-phospho-D-ribosyl)imidazole-4-carboxamide from 5-amino-1-(5-phospho-D-ribosyl)imidazole-4-carboxylate: step 1/2. The chain is Phosphoribosylaminoimidazole-succinocarboxamide synthase from Cupriavidus pinatubonensis (strain JMP 134 / LMG 1197) (Cupriavidus necator (strain JMP 134)).